A 309-amino-acid polypeptide reads, in one-letter code: Manganese ABC transporter substrate-binding lipoprotein PsaA (309 aa).

Residues 1-19 form the signal peptide; sequence MKKLGTLLVLFLSAIILVA. Cysteine 20 carries the N-palmitoyl cysteine lipid modification. The S-diacylglycerol cysteine moiety is linked to residue cysteine 20. Mn(2+)-binding residues include histidine 67, histidine 139, glutamate 205, and aspartate 280.

It belongs to the bacterial solute-binding protein 9 family. Lipoprotein receptor antigen (Lrai) subfamily.

The protein resides in the cell membrane. Part of the ATP-binding cassette (ABC) transport system PsaABC involved in manganese import. Binds manganese with high affinity and specificity and delivers it to the membrane permease for translocation into the cytoplasm. Also acts as an adhesin which is involved on adherence to extracellular matrix. It is an important factor in pathogenesis and infection. In Streptococcus pneumoniae serotype 4 (strain ATCC BAA-334 / TIGR4), this protein is Manganese ABC transporter substrate-binding lipoprotein PsaA (psaA).